Here is an 860-residue protein sequence, read N- to C-terminus: Protein translocase subunit SecA (860 aa).

Residues glutamine 87, 105–109 (GEGKT), and aspartate 514 each bind ATP. Residues cysteine 846, cysteine 848, cysteine 857, and cysteine 858 each contribute to the Zn(2+) site.

Belongs to the SecA family. In terms of assembly, monomer and homodimer. Part of the essential Sec protein translocation apparatus which comprises SecA, SecYEG and auxiliary proteins SecDF. Other proteins may also be involved. Zn(2+) serves as cofactor.

The protein resides in the cell membrane. Its subcellular location is the cytoplasm. It carries out the reaction ATP + H2O + cellular proteinSide 1 = ADP + phosphate + cellular proteinSide 2.. Functionally, part of the Sec protein translocase complex. Interacts with the SecYEG preprotein conducting channel. Has a central role in coupling the hydrolysis of ATP to the transfer of proteins into and across the cell membrane, serving as an ATP-driven molecular motor driving the stepwise translocation of polypeptide chains across the membrane. The sequence is that of Protein translocase subunit SecA from Endomicrobium trichonymphae.